The following is a 764-amino-acid chain: Serine/threonine-protein kinase MPS1 (764 aa).

Disordered regions lie at residues 66-95, 197-216, and 258-316; these read EEMD…SSHS, ELPL…RNTD, and QAAL…KSSI. Low complexity predominate over residues 85–95; that stretch reads TSGHTSTSSHS. Residues 201-216 are compositionally biased toward basic and acidic residues; sequence EDSHQTNFKETKRNTD. 2 stretches are compositionally biased toward low complexity: residues 272-292 and 306-315; these read KSRS…KDNS and STGSSSSKSS. The 281-residue stretch at 440–720 folds into the Protein kinase domain; sequence YEKIELLGRG…LSSTFLQPFM (281 aa). ATP contacts are provided by residues 446-454 and lysine 468; that span reads LGRGGSSRV. Residue aspartate 563 is the Proton acceptor of the active site.

It belongs to the protein kinase superfamily. Ser/Thr protein kinase family. Post-translationally, autophosphorylated.

The catalysed reaction is L-seryl-[protein] + ATP = O-phospho-L-seryl-[protein] + ADP + H(+). It carries out the reaction L-threonyl-[protein] + ATP = O-phospho-L-threonyl-[protein] + ADP + H(+). It catalyses the reaction L-tyrosyl-[protein] + ATP = O-phospho-L-tyrosyl-[protein] + ADP + H(+). Its function is as follows. Involved in mitotic spindle assembly checkpoint signaling, a process that delays anaphase until chromosomes are bioriented on the spindle, and in the repair of incorrect mitotic kinetochore-spindle microtubule attachments. Phosphorylates SPC105 on MELT motifs; phosphorylation is required for recruitment of the BUB1-BUB3 complex to kinetochores. Phosphorylates CNN1, which contributes to the enrichment of CNN1 on anaphase kinetochores. Implicated in spindle pole body (SPD) duplication. Phosphorylates the SPC29 and SPC110 spindle pole body components. In Saccharomyces cerevisiae (strain ATCC 204508 / S288c) (Baker's yeast), this protein is Serine/threonine-protein kinase MPS1 (MPS1).